A 705-amino-acid chain; its full sequence is Protein artemis (705 aa).

Threonine 380 is subject to Phosphothreonine. Serine 385 bears the Phosphoserine mark. Residues 451–462 (EESNSDSGEELE) are compositionally biased toward acidic residues. Disordered stretches follow at residues 451-484 (EESN…NADP), 535-569 (PKLC…GWDS), and 638-675 (TLSG…AELP). Over residues 546–559 (THISSQNSSQSTHI) the composition is skewed to low complexity. Polar residues predominate over residues 560 to 569 (TDQGSQGWDS). Positions 652 to 662 (SSTRADSQSSS) are enriched in low complexity. The residue at position 658 (serine 658) is a Phosphoserine; by ATM.

Belongs to the DNA repair metallo-beta-lactamase (DRMBL) family. As to quaternary structure, interacts with LIG4; the interaction is direct. Interacts with ATM. Interacts with BRCA1. Interacts with PRKDC. Interacts with TP53BP1. Also exhibits ATM- and phosphorylation-dependent interaction with the MRN complex, composed of MRE11, RAD50, and NBN. In terms of processing, phosphorylation on undefined residues by PRKDC may stimulate endonucleolytic activity on 5' and 3' hairpins and overhangs. PRKDC must remain present, even after phosphorylation, for efficient hairpin opening. Also phosphorylated by ATM in response to ionizing radiation (IR) and by ATR in response to ultraviolet (UV) radiation.

Its subcellular location is the nucleus. Required for V(D)J recombination, the process by which exons encoding the antigen-binding domains of immunoglobulins and T-cell receptor proteins are assembled from individual V, (D), and J gene segments. V(D)J recombination is initiated by the lymphoid specific RAG endonuclease complex, which generates site specific DNA double strand breaks (DSBs). These DSBs present two types of DNA end structures: hairpin sealed coding ends and phosphorylated blunt signal ends. These ends are independently repaired by the non homologous end joining (NHEJ) pathway to form coding and signal joints respectively. This protein likely exhibits single-strand specific 5'-3' exonuclease activity in isolation, and may acquire endonucleolytic activity on 5' and 3' hairpins and overhangs when in a complex with PRKDC. The latter activity may be required specifically for the resolution of closed hairpins prior to the formation of the coding joint. May also be required for the repair of complex DSBs induced by ionizing radiation, which require substantial end-processing prior to religation by NHEJ. This chain is Protein artemis (Dclre1c), found in Mus musculus (Mouse).